Consider the following 459-residue polypeptide: Ribulose bisphosphate carboxylase large chain (459 aa).

A propeptide spanning residues 1-2 is cleaved from the precursor; that stretch reads MS. Pro-3 bears the N-acetylproline mark. Residue Lys-14 is modified to N6,N6,N6-trimethyllysine. 2 residues coordinate substrate: Xaa-123 and Thr-173. Lys-175 (proton acceptor) is an active-site residue. Substrate is bound at residue Lys-177. Residues Lys-201, Asp-203, and Glu-204 each contribute to the Mg(2+) site. At Lys-201 the chain carries N6-carboxylysine. The active-site Proton acceptor is the His-294. Positions 295, 327, and 379 each coordinate substrate.

This sequence belongs to the RuBisCO large chain family. Type I subfamily. As to quaternary structure, heterohexadecamer of 8 large chains and 8 small chains; disulfide-linked. The disulfide link is formed within the large subunit homodimers. It depends on Mg(2+) as a cofactor. The disulfide bond which can form in the large chain dimeric partners within the hexadecamer appears to be associated with oxidative stress and protein turnover.

It localises to the plastid. It is found in the chloroplast. The enzyme catalyses 2 (2R)-3-phosphoglycerate + 2 H(+) = D-ribulose 1,5-bisphosphate + CO2 + H2O. It carries out the reaction D-ribulose 1,5-bisphosphate + O2 = 2-phosphoglycolate + (2R)-3-phosphoglycerate + 2 H(+). Functionally, ruBisCO catalyzes two reactions: the carboxylation of D-ribulose 1,5-bisphosphate, the primary event in carbon dioxide fixation, as well as the oxidative fragmentation of the pentose substrate in the photorespiration process. Both reactions occur simultaneously and in competition at the same active site. The chain is Ribulose bisphosphate carboxylase large chain from Corynocarpus laevigatus (New Zealand laurel).